The sequence spans 640 residues: MKITFPDGAVKEFEPGVSTADIAASISPGLKKKALAGKLNGELLDLVTPIHEDGAIEIVTPDHEDALGILRHSTAHLMAQALKRLYPDVKFGVGPAIESGFYYDIDTEAVISDESLVEIEKEMQKIVRENVPIEREVVSREEAIKRFKAIGDQYKLELIEAIPEDETVTIYTQGEFFDLCRGVHVPSTGKIQVFKLLSVAGAYWRGDSNNKMLQRIYGTAFFDKNGLKEFIQMQKEAKERDHRKLGKELDLFANSIEVGQGLPLWLPKGATIRRVIERYIVDKEERLGYNHVYTPIMANVELYKTSGHWDHYHEDMFPTMKMDNEELVLRPMNCPHHMMIYKNDIHSYRELPIRIAELGMMHRYEMSGALSGLQRVRGMTLNDAHVFVRPDQIKDEFKRVVELILEVYKDFDIKDYSFRLSYRDPKNTEKYFDDDAMWEKAQAMLKSAMDEMEMDYFEAEGEAAFYGPKLDVQVKTAIGKEETLSTVQLDFLLPERFDLTYIGEDGEKHRPVVIHRGVVSTMERFVAYLIEEYKGAFPTWLAPVQMELIPVNADAHLDYAKGVQDKLQRAGLRAEVDDRNEKLGYKIREAQTKKIPYALVLGDQEVEAGSVNVRRYGSKDSETMDLDAFIAQVVAEVSKY.

The TGS domain occupies 1 to 60; sequence MKITFPDGAVKEFEPGVSTADIAASISPGLKKKALAGKLNGELLDLVTPIHEDGAIEIVT. The tract at residues 241-538 is catalytic; that stretch reads DHRKLGKELD…LIEEYKGAFP (298 aa). Cys334, His385, and His515 together coordinate Zn(2+).

The protein belongs to the class-II aminoacyl-tRNA synthetase family. Homodimer. Requires Zn(2+) as cofactor.

The protein resides in the cytoplasm. The enzyme catalyses tRNA(Thr) + L-threonine + ATP = L-threonyl-tRNA(Thr) + AMP + diphosphate + H(+). Its function is as follows. Catalyzes the attachment of threonine to tRNA(Thr) in a two-step reaction: L-threonine is first activated by ATP to form Thr-AMP and then transferred to the acceptor end of tRNA(Thr). Also edits incorrectly charged L-seryl-tRNA(Thr). This chain is Threonine--tRNA ligase, found in Listeria monocytogenes serotype 4b (strain CLIP80459).